Here is a 276-residue protein sequence, read N- to C-terminus: Elongation factor Ts, mitochondrial (276 aa).

This sequence belongs to the EF-Ts family.

Its subcellular location is the mitochondrion. Associates with the EF-Tu.GDP complex and induces the exchange of GDP to GTP. It remains bound to the aminoacyl-tRNA.EF-Tu.GTP complex up to the GTP hydrolysis stage on the ribosome. This chain is Elongation factor Ts, mitochondrial, found in Leishmania infantum.